Consider the following 150-residue polypeptide: Troponin C, isotype gamma (150 aa).

Methionine 1 is modified (N-acetylmethionine). EF-hand domains are found at residues 7 to 42 (EQLS…MGVK), 43 to 78 (ISEK…FLIE), 83 to 118 (ALKA…LDNR), and 119 to 150 (LTED…MMSG). Residues aspartate 56, aspartate 58, serine 60, glutamate 62, and glutamate 67 each contribute to the Ca(2+) site. Positions 132, 134, 136, 138, and 143 each coordinate Ca(2+).

This sequence belongs to the troponin C family.

Troponin is the central regulatory protein of striated muscle contraction. Tn consists of three components: Tn-I which is the inhibitor of actomyosin ATPase, Tn-T which contains the binding site for tropomyosin and Tn-C. The binding of calcium to Tn-C abolishes the inhibitory action of Tn on actin filaments. The chain is Troponin C, isotype gamma from Astacus leptodactylus (Turkish narrow-clawed crayfish).